A 309-amino-acid polypeptide reads, in one-letter code: Cytochrome c biogenesis protein CcsA (309 aa).

The next 8 membrane-spanning stretches (helical) occupy residues 18-38, 43-63, 67-87, 102-122, 148-168, 216-236, 250-267, and 279-299; these read LGILVFYILLVNLPISLGAVF, FFIVKLLTILVNLLITLQLLF, ISGHFPVSNLYESLYFLAWGI, IIPSIAIPIELLTVAFACFVL, VMLSYAALIIGSLLSASVLFI, SILIGFVLLTLGLISGAVWAN, TWAFITWLFYAAYLHMRI, and LATSGFLVVIVCYLGVNFLGI.

Belongs to the CcmF/CycK/Ccl1/NrfE/CcsA family. In terms of assembly, may interact with ccs1.

It is found in the cellular thylakoid membrane. Its function is as follows. Required during biogenesis of c-type cytochromes (cytochrome c6 and cytochrome f) at the step of heme attachment. The polypeptide is Cytochrome c biogenesis protein CcsA (Prochlorococcus marinus (strain MIT 9312)).